Here is a 423-residue protein sequence, read N- to C-terminus: NDP-N-acetyl-D-galactosaminuronic acid dehydrogenase (423 aa).

11-28 (TISVVGLGYIGLPTATVL) lines the NAD(+) pocket. Residue Lys-218 is the Proton donor/acceptor of the active site. The active-site Nucleophile is Cys-272.

Belongs to the UDP-glucose/GDP-mannose dehydrogenase family.

Probably involved in synthesis of sugar components of EPS I, by converting NDP-N-acetyl-D-galactosamine into NDP-N-acetyl-D-galactosaminuronic acid. This chain is NDP-N-acetyl-D-galactosaminuronic acid dehydrogenase (epsD), found in Ralstonia solanacearum (Pseudomonas solanacearum).